The sequence spans 191 residues: Protein YceI (191 aa).

The N-terminal stretch at 1–22 is a signal peptide; the sequence is MKKSLLGLTFASLMFSAGSAVA.

This sequence belongs to the UPF0312 family. Type 1 subfamily.

The protein resides in the periplasm. This is Protein YceI from Escherichia coli O17:K52:H18 (strain UMN026 / ExPEC).